We begin with the raw amino-acid sequence, 504 residues long: Glycerol kinase (504 aa).

Position 12 (threonine 12) interacts with ADP. Positions 12, 13, and 14 each coordinate ATP. Threonine 12 provides a ligand contact to sn-glycerol 3-phosphate. ADP is bound at residue arginine 16. The sn-glycerol 3-phosphate site is built by arginine 82, glutamate 83, tyrosine 134, and aspartate 246. Glycerol is bound by residues arginine 82, glutamate 83, tyrosine 134, aspartate 246, and glutamine 247. Threonine 268 and glycine 312 together coordinate ADP. ATP contacts are provided by threonine 268, glycine 312, glutamine 316, and glycine 413. Positions 413 and 417 each coordinate ADP.

It belongs to the FGGY kinase family.

The catalysed reaction is glycerol + ATP = sn-glycerol 3-phosphate + ADP + H(+). It functions in the pathway polyol metabolism; glycerol degradation via glycerol kinase pathway; sn-glycerol 3-phosphate from glycerol: step 1/1. With respect to regulation, inhibited by fructose 1,6-bisphosphate (FBP). Its function is as follows. Key enzyme in the regulation of glycerol uptake and metabolism. Catalyzes the phosphorylation of glycerol to yield sn-glycerol 3-phosphate. This is Glycerol kinase from Paenarthrobacter aurescens (strain TC1).